A 424-amino-acid chain; its full sequence is MMTDPLSRSHAAALDAADPLRALRDAFVFPQHGGQDQTYFVGNSLGLQPRQARAMVSEVLDQWGALAVEGHFTGPTQWLTYHQLVRDGLARVVGAQPDEVVAMNTLTVNLHLMMASFYRPSAERAAILIEAGAFPSDRHAVESQLRLHGLDPDTHLIEVEPDAADGTLSMDAIAATIAQHGPRLALVLWPGIQYRTGQAFALGEIARLARAQGAAVGFDLAHAVGNIPLSLHDDGVDFAVWCHYKYLNAGPGAVGGCFVHARHAHSNLPRMAGWWGHEQPTRFRMEPQFVPSPGAEGWQLSNPPVLALAPLRASLELFDQAGMPALRAKSEQLTGHLEQLIHTRVPQVLQIVTPADPAQRGCQLSLRVAGGRTQGRALFEYLQSVGVLGDWREPDVIRIAPVPLYNRFCDLHQLVEHVETWAAA.

Residues leucine 106, threonine 107, 134–137, aspartate 219, histidine 222, and tyrosine 244 contribute to the pyridoxal 5'-phosphate site; that span reads FPSD. The residue at position 245 (lysine 245) is an N6-(pyridoxal phosphate)lysine. Pyridoxal 5'-phosphate is bound by residues tryptophan 274 and asparagine 302.

The protein belongs to the kynureninase family. In terms of assembly, homodimer. Requires pyridoxal 5'-phosphate as cofactor.

It catalyses the reaction L-kynurenine + H2O = anthranilate + L-alanine + H(+). It carries out the reaction 3-hydroxy-L-kynurenine + H2O = 3-hydroxyanthranilate + L-alanine + H(+). It participates in amino-acid degradation; L-kynurenine degradation; L-alanine and anthranilate from L-kynurenine: step 1/1. Its pathway is cofactor biosynthesis; NAD(+) biosynthesis; quinolinate from L-kynurenine: step 2/3. Functionally, catalyzes the cleavage of L-kynurenine (L-Kyn) and L-3-hydroxykynurenine (L-3OHKyn) into anthranilic acid (AA) and 3-hydroxyanthranilic acid (3-OHAA), respectively. The polypeptide is Kynureninase (Xanthomonas campestris pv. campestris (strain 8004)).